The primary structure comprises 2799 residues: Peramine synthetase ppzA (2799 aa).

The segment at glutamine 270–isoleucine 666 is adenylation 1. One can recognise a Carrier 1 domain in the interval glutamine 799–glutamate 875. Serine 836 bears the O-(pantetheine 4'-phosphoryl)serine mark. Residues aspartate 914–glutamate 1327 form a condensation region. The adenylation 2 stretch occupies residues aspartate 1350–threonine 1743. The interval leucine 1874–isoleucine 1970 is methylation (Met) domain. The region spanning serine 2290–aspartate 2368 is the Carrier 2 domain. Residue serine 2327 is modified to O-(pantetheine 4'-phosphoryl)serine. The thiesterase (TE) domain stretch occupies residues threonine 2420 to aspartate 2737.

This sequence belongs to the NRP synthetase family. The cofactor is pantetheine 4'-phosphate.

The catalysed reaction is (S)-1-pyrroline-5-carboxylate + L-arginine + S-adenosyl-L-methionine + 2 ATP = peramine + 2 AMP + S-adenosyl-L-homocysteine + 2 diphosphate + H2O + 2 H(+). The protein operates within secondary metabolite biosynthesis. Functionally, nonribosomal peptide synthetase; part of the gene cluster that mediates the biosynthesis of pyrrolopyrazines, secondary metabolites showing insecticidal activity. The single multifunctional NRPS ppzA is responsible for the biosynthesis of peramine. The condensation domain of ppzA is proposed to catalyze formation of a peptide bond between 1-pyrroline-5-carboxylate and arginine. The methylation domain of ppzA would catalyze the N-methylation of the alpha-amino group of arginine. The reductase domain is proposed to be responsible for reduction of the thioester and the cyclization to form an iminium ion resulting in release from the peptide synthetase. Deprotonation of this intermediate and oxidation of the pyrroline ring would give rise to peramine. This final oxidation to give the pyrrole functionality may be spontaneous. In Epichloe species that produce only peramine, the peramine synthetase gene is not localized in a gene cluster, in contrast to Metarhizium species that contain additional pyrrolopyrazine biosynthesis genes. The 2-oxoglutarate-Fe(II) type oxidoreductase ppzC hydroxylates peramine to yield the newly identified compound 8-hydroxyperamine whereas ppzD converts L-proline into trans-4-hydroxy-L-proline, a precursor of peramine biosynthesis. In Metarhizium majus (strain ARSEF 297), this protein is Peramine synthetase ppzA.